We begin with the raw amino-acid sequence, 503 residues long: Na(+)-translocating NADH-quinone reductase subunit B (503 aa).

5 helical membrane-spanning segments follow: residues 55–75 (MMLVVIALMPTVFVAIWNSGL), 85–105 (PQIMEAFLHISGFTSYFSFVS), 120–142 (IFLPLLFISYAVGGTCEVLFAII), 161–181 (ILPPTIPYWMAALGIAFGVVI), and 186–206 (FGGTGMNILNPALTGRAFLFF). Thr-248 is subject to FMN phosphoryl threonine. The next 5 membrane-spanning stretches (helical) occupy residues 361 to 381 (TSTVACLLGAGLLLLTGIASW), 387 to 407 (FGLSSLFFAWLFKIISILAAG), 417 to 437 (FFIPVYRHLFIGGLAFGLVFM), 452 to 472 (WFYGAFIGFLTILIRLINPAY), and 475 to 495 (GVMLAILLGNVFAPSFDRIAL).

It belongs to the NqrB/RnfD family. As to quaternary structure, composed of six subunits; NqrA, NqrB, NqrC, NqrD, NqrE and NqrF. FMN serves as cofactor.

Its subcellular location is the cell inner membrane. It catalyses the reaction a ubiquinone + n Na(+)(in) + NADH + H(+) = a ubiquinol + n Na(+)(out) + NAD(+). Its function is as follows. NQR complex catalyzes the reduction of ubiquinone-1 to ubiquinol by two successive reactions, coupled with the transport of Na(+) ions from the cytoplasm to the periplasm. NqrA to NqrE are probably involved in the second step, the conversion of ubisemiquinone to ubiquinol. This chain is Na(+)-translocating NADH-quinone reductase subunit B, found in Chlamydia muridarum (strain MoPn / Nigg).